A 466-amino-acid chain; its full sequence is Neuropeptide Y receptor type 5 (466 aa).

At 1 to 63 (MEVKLEEHFN…YRGSVDDLQY (63 aa)) the chain is on the extracellular side. N10, N17, N38, and N39 each carry an N-linked (GlcNAc...) asparagine glycan. A helical membrane pass occupies residues 64–84 (FLIGLYTFVSLLGFMGNLLIL). Residues 85 to 98 (MAVMKKRNQKTTVN) lie on the Cytoplasmic side of the membrane. The helical transmembrane segment at 99–119 (FLIGNLAFSDILVVLFCSPFT) threads the bilayer. The Extracellular portion of the chain corresponds to 120-138 (LTSVLLDQWMFGKAMCHIM). A disulfide bond links C135 and C219. Residues 139–159 (PFLQCVSVLVSTLILISIAIV) form a helical membrane-spanning segment. Over 160–177 (RYHMIKHPISNNLTANHG) the chain is Cytoplasmic. The chain crosses the membrane as a helical span at residues 178 to 198 (YFLIATVWTLGFAICSPLPVF). The Extracellular segment spans residues 199 to 229 (HSLVELKETFGSALLSSKYLCVESWPSDSYR). The chain crosses the membrane as a helical span at residues 230 to 250 (IAFTISLLLVQYILPLVCLTV). Residues 251–389 (SHTSVCRSIS…KKRSRSVFYR (139 aa)) are Cytoplasmic-facing. The disordered stretch occupies residues 323–346 (GPSQEKHLTVPENPGSVRSQLSPS). Residues 390 to 410 (LTILILVFAVSWMPLHVFHVV) form a helical membrane-spanning segment. At 411-427 (TDFNDNLISNRHFKLVY) the chain is on the extracellular side. A helical membrane pass occupies residues 428 to 448 (CICHLLGMMSCCLNPILYGFL). The Cytoplasmic segment spans residues 449–466 (NNGIKADLRALIHCLHMS). The S-palmitoyl cysteine moiety is linked to residue C462.

Belongs to the G-protein coupled receptor 1 family.

The protein localises to the cell membrane. In terms of biological role, receptor for neuropeptide Y and peptide YY. The activity of this receptor is mediated by G proteins that inhibit adenylate cyclase activity. Seems to be associated with food intake. Could be involved in feeding disorders. This is Neuropeptide Y receptor type 5 (Npy5r) from Mus musculus (Mouse).